Consider the following 233-residue polypeptide: tRNA (guanine-N(7)-)-methyltransferase (233 aa).

The interval 1 to 36 (MSEFDPNPPRRNFYGRRHGKTLRQSQKGYLSEDLGS) is disordered. Positions 68, 93, 120, and 142 each coordinate S-adenosyl-L-methionine. The active site involves Asp142. Residues Lys146, Asp178, and 211–214 (TRYE) contribute to the substrate site.

Belongs to the class I-like SAM-binding methyltransferase superfamily. TrmB family.

It catalyses the reaction guanosine(46) in tRNA + S-adenosyl-L-methionine = N(7)-methylguanosine(46) in tRNA + S-adenosyl-L-homocysteine. It functions in the pathway tRNA modification; N(7)-methylguanine-tRNA biosynthesis. Functionally, catalyzes the formation of N(7)-methylguanine at position 46 (m7G46) in tRNA. In Paracoccus denitrificans (strain Pd 1222), this protein is tRNA (guanine-N(7)-)-methyltransferase.